The sequence spans 557 residues: Eudesmanediol synthase (557 aa).

2 residues coordinate Mg(2+): Asp-310 and Asp-314. Residues Asp-310, Asp-314, Arg-450, and Asn-453 each contribute to the substrate site. The DDXXD motif signature appears at 310–314 (DDTFD). Residues Asn-453 and Ser-457 each coordinate Mg(2+).

It belongs to the terpene synthase family. In terms of assembly, monomer. It depends on Mg(2+) as a cofactor. Mn(2+) is required as a cofactor. As to expression, specifically expressed in roots.

The protein localises to the cytoplasm. The catalysed reaction is (2E,6E)-farnesyl diphosphate + 2 H2O = 7-epi-ent-eudesmane-5,11-diol + diphosphate. The protein operates within secondary metabolite biosynthesis; terpenoid biosynthesis. In terms of biological role, component of the volatile terpenes biosynthesis pathways. Dihydroxylated sesquiterpenoid synthase that generates dually hydroxylated products directly from (E,E)-farnesyl diphosphate, primarily eudesmane-2,11-diol, along with two closely related structural isomers. The protein is Eudesmanediol synthase of Zea mays (Maize).